Consider the following 802-residue polypeptide: Serine/threonine-protein kinase zyg-8 (802 aa).

Polar residues predominate over residues 1 to 13 (MPQTSAWQLNDTT). Residues 1–102 (MPQTSAWQLN…SAPSTSSAHR (102 aa)) form a disordered region. The span at 15–24 (RPPPPPPPPG) shows a compositional bias: pro residues. The segment covering 89–99 (SPSSSAPSTSS) has biased composition (low complexity). 2 consecutive Doublecortin domains span residues 211 to 298 (KRLR…VDYS) and 340 to 423 (RIIK…ADDL). Residues 430–470 (HKSVGSGTSSNMRRTSRRSTMPNRNESLRHDRSGSVIPDQD) are disordered. A compositionally biased stretch (low complexity) spans 434 to 454 (GSGTSSNMRRTSRRSTMPNRN). The region spanning 482–743 (FQLVRLIGDG…AGELLNDEWM (262 aa)) is the Protein kinase domain. ATP-binding positions include 488-496 (IGDGNTAVV) and Lys-512. The Proton acceptor role is filled by Asp-604.

The protein belongs to the protein kinase superfamily. CAMK Ser/Thr protein kinase family. CaMK subfamily. As to quaternary structure, interacts with tac-1. Expressed in AFD thermosensory neurons. Expressed in cells near the nerve ring, in motor neurons in the ventral nerve cord and in the six touch receptor neurons including ALML/R, PLML/R and AVM and PVM. Expressed in hypodermal and neural tissues and in the germline.

The protein localises to the cytoplasm. It localises to the cytoskeleton. The protein resides in the microtubule organizing center. It is found in the centrosome. Its subcellular location is the spindle. It carries out the reaction L-seryl-[protein] + ATP = O-phospho-L-seryl-[protein] + ADP + H(+). The enzyme catalyses L-threonyl-[protein] + ATP = O-phospho-L-threonyl-[protein] + ADP + H(+). Probable kinase. Kinase activity may be involved in positioning of spindle poles in meiosis and mitosis. Plays a role in spindle positioning during asymmetric division of one-cell stage embryos. Affects spindle position by promoting microtubule assembly during anaphase. Plays a role in the assembly and stability of oocyte spindle, perhaps balancing the forces in the spindle and maintaining their morphology during metaphase. Plays a role in cell division and in embryonic viability up until gastrulation. Required for neuronal morphology and polarity and restricting ectopic process outgrowth; probably as a result of a role in maintaining microtubule integrity. Involved in maintaining neuronal microtubule number, length and packing. May promote axonal and synaptic growth. Plays a role in regulating thermotaxis responses in AFD thermosensory neurons. Required for touch sensitivity in adult touch response receptor neurons. The sequence is that of Serine/threonine-protein kinase zyg-8 from Caenorhabditis elegans.